A 320-amino-acid chain; its full sequence is dTDP-glucose 4,6-dehydratase (320 aa).

NAD(+) is bound by residues 11–12, 38–41, 64–65, 84–88, and Ser-103; these read FI, DKLG, DI, and FAAET. Residue Thr-88 participates in substrate binding. Thr-128 is a substrate binding site. The Proton donor role is filled by Asp-129. Catalysis depends on proton acceptor residues Glu-130 and Tyr-152. 152–156 provides a ligand contact to NAD(+); sequence YAASK. A substrate-binding site is contributed by Asn-181. Asn-182 is an NAD(+) binding site. Residues 191-192, 207-209, Arg-216, Asn-251, and 274-278 each bind substrate; these read KM, PVY, and DRKGH.

Belongs to the NAD(P)-dependent epimerase/dehydratase family. dTDP-glucose dehydratase subfamily. As to quaternary structure, homodimer. The cofactor is NAD(+).

It catalyses the reaction dTDP-alpha-D-glucose = dTDP-4-dehydro-6-deoxy-alpha-D-glucose + H2O. Functionally, probably involved in the biosynthesis of the acarviose moiety of the alpha-glucosidase inhibitor acarbose. Catalyzes the dehydration of dTDP-D-glucose to form dTDP-6-deoxy-D-xylo-4-hexulose via a three-step process involving oxidation, dehydration and reduction. The chain is dTDP-glucose 4,6-dehydratase from Actinoplanes sp. (strain ATCC 31044 / CBS 674.73 / SE50/110).